We begin with the raw amino-acid sequence, 316 residues long: Phosducin-like protein 1 (316 aa).

Residues Met-1–Asp-61 are disordered. Residues Lys-12 to Asn-41 show a composition bias toward basic and acidic residues. The span at Glu-49–Asp-61 shows a compositional bias: acidic residues. In terms of domain architecture, Phosducin spans Ser-95–Asn-290. The stretch at Glu-102–Gln-156 forms a coiled coil. Positions Phe-175–Asp-316 are thioredoxin fold. A disordered region spans residues Lys-293–Asp-316.

This sequence belongs to the phosducin family.

It localises to the cytoplasm. Required for normal chemotaxis in response to cAMP and folate. Required for the heterodimerization of the G protein beta and gamma subunits gpbA and gpgA, which is itself thought to be necessary for prenylation of the gamma subunit gpgA and its association with plasma membranes. This is Phosducin-like protein 1 (phlp1) from Dictyostelium discoideum (Social amoeba).